Here is a 160-residue protein sequence, read N- to C-terminus: MIKNRKKKSYTSVYALGQYISMSAHKARRVIDQIRGRSYEEALMILELMPYRGCYPIFKLVYSAAANASHNKGFKETNLVISKAEVNQGNTVKKLKPRARGRSYPIKRSTCHITIVLEDISFYQQYEEYLMYLKKPGCSNENRNLTCHDTYSSGGLWDKK.

It belongs to the universal ribosomal protein uL22 family. In terms of assembly, part of the 50S ribosomal subunit.

Its subcellular location is the plastid. It localises to the chloroplast. This protein binds specifically to 23S rRNA. Functionally, the globular domain of the protein is located near the polypeptide exit tunnel on the outside of the subunit, while an extended beta-hairpin is found that lines the wall of the exit tunnel in the center of the 70S ribosome. The sequence is that of Large ribosomal subunit protein uL22c (rpl22) from Nasturtium officinale (Watercress).